The primary structure comprises 224 residues: GTP cyclohydrolase 1 (224 aa).

The segment at 1–20 (MKQEKTVSPTVENNRSAESR) is disordered. Zn(2+) contacts are provided by Cys-114, His-117, and Cys-185.

The protein belongs to the GTP cyclohydrolase I family. In terms of assembly, toroid-shaped homodecamer, composed of two pentamers of five dimers.

The catalysed reaction is GTP + H2O = 7,8-dihydroneopterin 3'-triphosphate + formate + H(+). The protein operates within cofactor biosynthesis; 7,8-dihydroneopterin triphosphate biosynthesis; 7,8-dihydroneopterin triphosphate from GTP: step 1/1. This chain is GTP cyclohydrolase 1, found in Chlorobaculum tepidum (strain ATCC 49652 / DSM 12025 / NBRC 103806 / TLS) (Chlorobium tepidum).